The primary structure comprises 216 residues: Adenylate kinase (216 aa).

Residue 10 to 15 coordinates ATP; sequence GAGKGT. Residues 30-59 are NMP; sequence STGDMLRAAVAAGTEVGKRAKAVMDAGKLV. AMP is bound by residues threonine 31, arginine 36, 57–59, 85–88, and glutamine 92; these read KLV and GFPR. An LID region spans residues 126 to 163; sequence GRYTCANCGAGYHDENLRPKVEGVCDRCGSTHFKRRAD. Arginine 127 lines the ATP pocket. The Zn(2+) site is built by cysteine 130, cysteine 133, cysteine 150, and cysteine 153. AMP contacts are provided by arginine 160 and arginine 172. Position 200 (alanine 200) interacts with ATP.

It belongs to the adenylate kinase family. Monomer.

The protein resides in the cytoplasm. The enzyme catalyses AMP + ATP = 2 ADP. Its pathway is purine metabolism; AMP biosynthesis via salvage pathway; AMP from ADP: step 1/1. In terms of biological role, catalyzes the reversible transfer of the terminal phosphate group between ATP and AMP. Plays an important role in cellular energy homeostasis and in adenine nucleotide metabolism. The chain is Adenylate kinase from Rhizobium rhizogenes (strain K84 / ATCC BAA-868) (Agrobacterium radiobacter).